The sequence spans 140 residues: MEMKARGLRIPLLLLLVTVVVMAKVNHIQRWGGFKEKAMSKKNINSTLHFFIRSYNNASNDTYLYQVQKLIQGQMQLTTGVEYLVTVKIGRTKCKKNETKKASCPLQSSKLKKSLICKSLIYSVPWMNYYQLWNNSCQES.

The N-terminal stretch at 1-23 (MEMKARGLRIPLLLLLVTVVVMA) is a signal peptide. Residues 32–126 (GGFKEKAMSK…CKSLIYSVPW (95 aa)) form the Cystatin domain. Asn45 carries N-linked (GlcNAc...) asparagine glycosylation. 2 disulfide bridges follow: Cys94-Cys104 and Cys117-Cys137.

It belongs to the cystatin family. As to expression, highly expressed in testis where it localizes to spermatogonium, spermatocyes and round spermatids. Not detected in spermatozoa. Also detected in epididymis, cerebrum and pituitary.

Its subcellular location is the secreted. The sequence is that of Cystatin-like 1 from Mus musculus (Mouse).